The primary structure comprises 1827 residues: Sucrase-isomaltase, intestinal (1827 aa).

At 2-12 (ARKKFSGLEIS) the chain is on the cytoplasmic side. Position 7 is a phosphoserine; by PKA (serine 7). A helical; Signal-anchor for type II membrane protein membrane pass occupies residues 13-32 (LIVLFVIVTIIAIALIVVLA). At 33–1827 (TKTPAVDEIS…LEEPIEINWS (1795 aa)) the chain is on the lumenal side. The disordered stretch occupies residues 40-61 (EISDSTSTPATTRVTTNPSDSG). Low complexity predominate over residues 45 to 55 (TSTPATTRVTT). One can recognise a P-type 1 domain in the interval 61-110 (GKCPNVLNDPVNVRINCIPEQFPTEGICAQRGCCWRPWNDSLIPWCFFVD). 3 disulfides stabilise this stretch: cysteine 63-cysteine 94, cysteine 77-cysteine 93, and cysteine 88-cysteine 106. N-linked (GlcNAc...) asparagine glycosylation occurs at asparagine 99. Residues 110-1007 (DNHGYNVQDM…DLQLNTANAR (898 aa)) are isomaltase. Sulfotyrosine is present on residues tyrosine 237 and tyrosine 239. The substrate site is built by aspartate 264 and aspartate 388. Residues tyrosine 391 and tyrosine 400 each carry the sulfotyrosine modification. Asparagine 437 and asparagine 455 each carry an N-linked (GlcNAc...) asparagine glycan. The Nucleophile; for isomaltase activity role is filled by aspartate 505. Cysteine 520 and cysteine 545 form a disulfide bridge. Arginine 588 contributes to the substrate binding site. The For isomaltase activity role is filled by aspartate 604. A disulfide bridge links cysteine 635 with cysteine 646. Histidine 662 contacts substrate. Sulfotyrosine is present on residues tyrosine 667, tyrosine 763, and tyrosine 765. Residues asparagine 823, asparagine 855, asparagine 904, and asparagine 926 are each glycosylated (N-linked (GlcNAc...) asparagine). Residues 932–978 (NQIFSENERFNCYPDADLATEQKCTQRGCVWRTGSSLSKAPECYFPR) enclose the P-type 2 domain. The interval 1008–1827 (IKLPSDPIST…LEEPIEINWS (820 aa)) is sucrase. N-linked (GlcNAc...) asparagine glycosylation is found at asparagine 1235, asparagine 1303, asparagine 1340, and asparagine 1354. Aspartate 1394 serves as the catalytic Nucleophile; for sucrase activity. Glutamate 1397 acts as the For sucrase activity in catalysis. A glycan (N-linked (GlcNAc...) asparagine) is linked at asparagine 1403. Aspartate 1500 acts as the Proton donor; for isomaltase activity in catalysis. 6 N-linked (GlcNAc...) asparagine glycosylation sites follow: asparagine 1535, asparagine 1572, asparagine 1675, asparagine 1748, asparagine 1763, and asparagine 1815.

The protein belongs to the glycosyl hydrolase 31 family. In terms of assembly, the resulting sucrase and isomaltase subunits stay associated with one another in a complex by non-covalent linkages. Post-translationally, the precursor is proteolytically cleaved when exposed to pancreatic proteases in the intestinal lumen. In terms of processing, sulfated. Expressed in the poorly differentiated crypt cells of the small intestine as well as in the mature villous cells. Expressed at very low levels in the colon.

The protein resides in the apical cell membrane. It catalyses the reaction Hydrolysis of sucrose and maltose by an alpha-D-glucosidase-type action.. It carries out the reaction Hydrolysis of (1-&gt;6)-alpha-D-glucosidic linkages in some oligosaccharides produced from starch and glycogen by alpha-amylase, and in isomaltose.. Its function is as follows. Plays an important role in the final stage of carbohydrate digestion. Isomaltase activity is specific for both alpha-1,4- and alpha-1,6-oligosaccharides. The sequence is that of Sucrase-isomaltase, intestinal (SI) from Homo sapiens (Human).